The following is a 265-amino-acid chain: Pyrroline-5-carboxylate reductase (265 aa).

Belongs to the pyrroline-5-carboxylate reductase family.

It localises to the cytoplasm. It carries out the reaction L-proline + NADP(+) = (S)-1-pyrroline-5-carboxylate + NADPH + 2 H(+). It catalyses the reaction L-proline + NAD(+) = (S)-1-pyrroline-5-carboxylate + NADH + 2 H(+). It participates in amino-acid biosynthesis; L-proline biosynthesis; L-proline from L-glutamate 5-semialdehyde: step 1/1. Its function is as follows. Catalyzes the reduction of 1-pyrroline-5-carboxylate (PCA) to L-proline. This chain is Pyrroline-5-carboxylate reductase, found in Aquifex aeolicus (strain VF5).